Reading from the N-terminus, the 1022-residue chain is D-2-hydroxyglutarate dehydrogenase (1022 aa).

Residues 53–286 form the FAD-binding PCMH-type domain; it reads YQLLPDAVLF…SEARLDITPL (234 aa). (R)-2-hydroxyglutarate contacts are provided by Arg-407 and His-505. Positions 667-700 constitute a 4Fe-4S ferredoxin-type domain; the sequence is FSHEVKEAMSGCLACKACSTQCPIKIDVPAFRSR. The [4Fe-4S] cluster site is built by Cys-678, Cys-681, Cys-684, and Cys-688.

It in the N-terminal section; belongs to the FAD-binding oxidoreductase/transferase type 4 family. In terms of assembly, homotetramer. Requires [4Fe-4S] cluster as cofactor. The cofactor is FAD.

It catalyses the reaction (R)-2-hydroxyglutarate + A = 2-oxoglutarate + AH2. Activity is completely inhibited by the addition of 0.5 mM Mn(2+), Ni(2+), or Co(2+) and partially inhibited by 0.5 mM Zn(2+). Its function is as follows. Catalyzes the oxidation of D-2-hydroxyglutarate (D-2-HGA) to 2-oxoglutarate. Appears to be the only D2HGDH in P.ananatis, providing the way to recycle D-2-HGA produced during L-serine synthesis by SerA, by converting it back to 2-oxoglutarate. Is involved in the utilization of D-2-HGA, that can support the growth of P.ananatis as a sole carbon source, although it barely serves as a good substrate. The physiological molecule that functions as the primary electron acceptor during D-2-HGA oxidation by YdiJ in P.ananatis is unknown. Shows strict substrate specificity towards D-2-HGA, since it has no detectable activity on L-2-hydroxyglutarate, L-malate, D-malate, L-lactate, D-lactate, L-tartrate, D-tartrate, L-glycerate, D-glycerate, glutarate, or pyruvate. This Pantoea ananatis (strain AJ13355) protein is D-2-hydroxyglutarate dehydrogenase.